The chain runs to 283 residues: MFRPASRALLRAPTPAVGVARGPTRRFISSSTGSTKPRSWKNTFIRVGLASGAVYYYNTSSVFAETPSLSFRPEAQPKHEDGKSLPTLDSIKPKSREEKKAPAAAADAAATPASTGANAQSESPLKSAEELEAEADQQAAFNPETGEINWDCPCLGGMAYGPCGEEFRAAFSCFVYSEEEPKGMDCIDKFKAMQDCFRAHPDVYGAELDDDEEAGAEANAAGVEQPLAAEVDASVPVEKHEQAKEVRDEVKSAAGEVAESEEVVPKALDVSEQEKTPEQQTEK.

The N-terminal 35 residues, 1-35 (MFRPASRALLRAPTPAVGVARGPTRRFISSSTGST), are a transit peptide targeting the mitochondrion. Topologically, residues 36-46 (KPRSWKNTFIR) are mitochondrial matrix. The chain crosses the membrane as a helical; Signal-anchor for type II membrane protein span at residues 47–64 (VGLASGAVYYYNTSSVFA). Over 65–283 (ETPSLSFRPE…EKTPEQQTEK (219 aa)) the chain is Mitochondrial intermembrane. The interval 72-136 (RPEAQPKHED…SAEELEAEAD (65 aa)) is disordered. Over residues 91-101 (IKPKSREEKKA) the composition is skewed to basic and acidic residues. Residues 102–119 (PAAAADAAATPASTGANA) are compositionally biased toward low complexity. 3 disulfides stabilise this stretch: cysteine 152/cysteine 154, cysteine 163/cysteine 196, and cysteine 173/cysteine 186. The CHCH domain maps to 160-204 (YGPCGEEFRAAFSCFVYSEEEPKGMDCIDKFKAMQDCFRAHPDVY). 2 consecutive short sequence motifs (cx9C motif) follow at residues 163 to 173 (CGEEFRAAFSC) and 186 to 196 (CIDKFKAMQDC). The disordered stretch occupies residues 211 to 283 (DEEAGAEANA…EKTPEQQTEK (73 aa)). Composition is skewed to basic and acidic residues over residues 237 to 251 (VEKHEQAKEVRDEVK) and 272 to 283 (EQEKTPEQQTEK).

Monomer. It depends on Cu(2+) as a cofactor. Zn(2+) is required as a cofactor.

It is found in the mitochondrion inner membrane. Its function is as follows. Required for the import and folding of small cysteine-containing proteins (small Tim) in the mitochondrial intermembrane space (IMS). Forms a redox cycle with ERV1 that involves a disulfide relay system. Precursor proteins to be imported into the IMS are translocated in their reduced form into the mitochondria. The oxidized form of MIA40 forms a transient intermolecular disulfide bridge with the reduced precursor protein, resulting in oxidation of the precursor protein that now contains an intramolecular disulfide bond and is able to undergo folding in the IMS. In Emericella nidulans (strain FGSC A4 / ATCC 38163 / CBS 112.46 / NRRL 194 / M139) (Aspergillus nidulans), this protein is Mitochondrial intermembrane space import and assembly protein 40 (mia40).